A 167-amino-acid chain; its full sequence is Small ribosomal subunit protein uS5 (167 aa).

The region spanning 12–75 (IEDRVVAINR…ETARKSLIEV (64 aa)) is the S5 DRBM domain.

The protein belongs to the universal ribosomal protein uS5 family. In terms of assembly, part of the 30S ribosomal subunit. Contacts proteins S4 and S8.

Functionally, with S4 and S12 plays an important role in translational accuracy. In terms of biological role, located at the back of the 30S subunit body where it stabilizes the conformation of the head with respect to the body. This Pediococcus pentosaceus (strain ATCC 25745 / CCUG 21536 / LMG 10740 / 183-1w) protein is Small ribosomal subunit protein uS5.